The following is a 670-amino-acid chain: Probable potassium transport system protein Kup (670 aa).

The tract at residues 1 to 42 is disordered; it reads MSQIPSPNDPPPAGAVPTSGAPAGPSATPAPSPTAGFSLPEH. Residues 15–35 are compositionally biased toward low complexity; it reads AVPTSGAPAGPSATPAPSPTA. 12 helical membrane passes run 51–71, 91–111, 144–164, 180–200, 208–228, 254–274, 290–310, 322–342, 380–400, 406–426, 440–460, and 464–484; these read LAALAVGALGVVYGDIGTSPL, VLGVLSLVFWAMTFVVTFKYM, VLLMLGLFGAALLYGDGIITP, PAMERVVVPATVVILVFLFLF, VGAVFGPIMLVWFATIAVLGV, GWHGFLVLGGVVLVITGGEAL, WLGLAMPALLLNYLGQGALLL, LLAPEWALYPTIAIATAAAIV, IYLPEVNWMLGTACVALVLGF, LASAYGIAVTGTMIVTTLLFH, AWPLTVLFLTVDASFFLANVV, and DGGWFPIAAAALVFTLMSTWK.

This sequence belongs to the HAK/KUP transporter (TC 2.A.72) family.

The protein localises to the cell inner membrane. The enzyme catalyses K(+)(in) + H(+)(in) = K(+)(out) + H(+)(out). Functionally, transport of potassium into the cell. Likely operates as a K(+):H(+) symporter. This is Probable potassium transport system protein Kup from Anaeromyxobacter dehalogenans (strain 2CP-C).